The chain runs to 298 residues: MLTHLERLEAESIHIMREVVAESENPVMLYSIGKDSSVMLHLAMKAFYPAKPPFPLLHVDTTWKFREMIAFRDETAARLGLDLRVHINPDGVANGIDPFTHGSAVHTDVWKTQGLKQALDHYGFDAAFGGARRDEEKSRAKERIVSLRSEQHRWDPKRQRPELWSLYNARKRKGESLRVFPISNWTELDIWQYIQLHDIPIVPLYFAKERPVVERDGALIMVDDERLPLREGEVPQMRKVRFRTLGCYPLTGAIDSDATSLDDILQEMRETRTSERQGRLIDSDSAGSMEKKKQEGYF.

Basic and acidic residues-rich tracts occupy residues 272–282 (RTSERQGRLID) and 289–298 (MEKKKQEGYF). The segment at 272–298 (RTSERQGRLIDSDSAGSMEKKKQEGYF) is disordered.

It belongs to the PAPS reductase family. CysD subfamily. In terms of assembly, heterodimer composed of CysD, the smaller subunit, and CysN.

It carries out the reaction sulfate + ATP + H(+) = adenosine 5'-phosphosulfate + diphosphate. Its pathway is sulfur metabolism; hydrogen sulfide biosynthesis; sulfite from sulfate: step 1/3. In terms of biological role, with CysN forms the ATP sulfurylase (ATPS) that catalyzes the adenylation of sulfate producing adenosine 5'-phosphosulfate (APS) and diphosphate, the first enzymatic step in sulfur assimilation pathway. APS synthesis involves the formation of a high-energy phosphoric-sulfuric acid anhydride bond driven by GTP hydrolysis by CysN coupled to ATP hydrolysis by CysD. The chain is Sulfate adenylyltransferase subunit 2 from Burkholderia lata (strain ATCC 17760 / DSM 23089 / LMG 22485 / NCIMB 9086 / R18194 / 383).